The following is a 432-amino-acid chain: Glutamyl-tRNA reductase (432 aa).

Residues 55–58 (TCNR), S114, 119–121 (ETQ), and Q125 each bind substrate. C56 acts as the Nucleophile in catalysis. Position 194-199 (194-199 (GAGEMI)) interacts with NADP(+).

This sequence belongs to the glutamyl-tRNA reductase family. As to quaternary structure, homodimer.

The enzyme catalyses (S)-4-amino-5-oxopentanoate + tRNA(Glu) + NADP(+) = L-glutamyl-tRNA(Glu) + NADPH + H(+). Its pathway is porphyrin-containing compound metabolism; protoporphyrin-IX biosynthesis; 5-aminolevulinate from L-glutamyl-tRNA(Glu): step 1/2. Functionally, catalyzes the NADPH-dependent reduction of glutamyl-tRNA(Glu) to glutamate 1-semialdehyde (GSA). This is Glutamyl-tRNA reductase from Burkholderia ambifaria (strain ATCC BAA-244 / DSM 16087 / CCUG 44356 / LMG 19182 / AMMD) (Burkholderia cepacia (strain AMMD)).